The chain runs to 891 residues: Valine--tRNA ligase (891 aa).

A 'HIGH' region motif is present at residues 43 to 53 (PFTSGTLHLGH). A 'KMSKS' region motif is present at residues 536 to 540 (KMSKS). Lys539 provides a ligand contact to ATP.

This sequence belongs to the class-I aminoacyl-tRNA synthetase family. ValS type 2 subfamily.

It localises to the cytoplasm. The enzyme catalyses tRNA(Val) + L-valine + ATP = L-valyl-tRNA(Val) + AMP + diphosphate. Functionally, catalyzes the attachment of valine to tRNA(Val). As ValRS can inadvertently accommodate and process structurally similar amino acids such as threonine, to avoid such errors, it has a 'posttransfer' editing activity that hydrolyzes mischarged Thr-tRNA(Val) in a tRNA-dependent manner. This chain is Valine--tRNA ligase, found in Pyrococcus abyssi (strain GE5 / Orsay).